The following is a 135-amino-acid chain: Cytochrome c-type biogenesis protein CcmE (135 aa).

Residues 1 to 8 lie on the Cytoplasmic side of the membrane; the sequence is MLLLRWKR. Residues 9 to 29 form a helical; Signal-anchor for type II membrane protein membrane-spanning segment; it reads FWFLSLGILLFSGVVSLMLFN. The Periplasmic portion of the chain corresponds to 30–135; the sequence is LSESISFFYL…EDFIKSVRGE (106 aa). The heme site is built by H118 and Y122.

Belongs to the CcmE/CycJ family.

The protein resides in the cell inner membrane. Heme chaperone required for the biogenesis of c-type cytochromes. Transiently binds heme delivered by CcmC and transfers the heme to apo-cytochromes in a process facilitated by CcmF and CcmH. The sequence is that of Cytochrome c-type biogenesis protein CcmE from Neorickettsia sennetsu (strain ATCC VR-367 / Miyayama) (Ehrlichia sennetsu).